The following is a 204-amino-acid chain: Putative uracil phosphoribosyltransferase urg2 (204 aa).

Residues R75, R100, and 126-134 (DPVMATGGT) contribute to the 5-phospho-alpha-D-ribose 1-diphosphate site. D-ribose 5-phosphate is bound at residue Y187. Uracil contacts are provided by residues L188 and 193-195 (GDI). D194 contacts 5-phospho-alpha-D-ribose 1-diphosphate.

The protein belongs to the UPRTase family. It depends on Mg(2+) as a cofactor.

The protein resides in the cytoplasm. It localises to the nucleus. It catalyses the reaction UMP + diphosphate = 5-phospho-alpha-D-ribose 1-diphosphate + uracil. The protein operates within pyrimidine metabolism; UMP biosynthesis via salvage pathway; UMP from uracil: step 1/1. With respect to regulation, allosterically activated by GTP. Catalyzes the conversion of uracil and 5-phospho-alpha-D-ribose 1-diphosphate (PRPP) to UMP and diphosphate. This chain is Putative uracil phosphoribosyltransferase urg2, found in Schizosaccharomyces pombe (strain 972 / ATCC 24843) (Fission yeast).